A 744-amino-acid chain; its full sequence is Potassium-transporting ATPase ATP-binding subunit (744 aa).

4 helical membrane-spanning segments follow: residues 80–100, 108–128, 265–285, and 310–330; these read PVMF…VMAL, AGFI…ANVA, LALT…TVTL, and VLVA…LSAI. Asp-363 serves as the catalytic 4-aspartylphosphate intermediate. ATP-binding positions include Asp-400, Glu-404, 435 to 442, and Lys-457; that span reads FSAQTRMS. Residues Asp-580 and Asp-584 each contribute to the Mg(2+) site. A run of 3 helical transmembrane segments spans residues 650 to 670, 678 to 698, and 724 to 744; these read FAII…LNVM, AVMS…PLAL, and LLLP…MGWV.

This sequence belongs to the cation transport ATPase (P-type) (TC 3.A.3) family. Type IA subfamily. As to quaternary structure, the system is composed of three essential subunits: KdpA, KdpB and KdpC.

The protein localises to the cell inner membrane. The catalysed reaction is K(+)(out) + ATP + H2O = K(+)(in) + ADP + phosphate + H(+). Functionally, part of the high-affinity ATP-driven potassium transport (or Kdp) system, which catalyzes the hydrolysis of ATP coupled with the electrogenic transport of potassium into the cytoplasm. This subunit is responsible for energy coupling to the transport system and for the release of the potassium ions to the cytoplasm. The sequence is that of Potassium-transporting ATPase ATP-binding subunit from Ralstonia nicotianae (strain ATCC BAA-1114 / GMI1000) (Ralstonia solanacearum).